The chain runs to 125 residues: Alpha-endosulfine (125 aa).

Residues 1–37 (MSDKYIGDSHLEETGEEKQDSQEKEAVTPEKAEEQKL) are compositionally biased toward basic and acidic residues. The interval 1–53 (MSDKYIGDSHLEETGEEKQDSQEKEAVTPEKAEEQKLKAKYPNLGQKPGGSDF) is disordered. T28 carries the post-translational modification Phosphothreonine; by CDK2. Residue S67 is modified to Phosphoserine; by GWL. The segment at 81–108 (QLPCAGPDKNLVTGDHIPTPQDLPQRKS) is disordered. Residue T99 is modified to Phosphothreonine; by CDK2. S109 carries the phosphoserine; by PKA modification.

This sequence belongs to the endosulfine family. In terms of processing, phosphorylation at Ser-67 by gwl during mitosis is essential for interaction with ppp2r2d (PR55-delta) and subsequent inactivation of PP2A.

It localises to the cytoplasm. In terms of biological role, protein phosphatase inhibitor that specifically inhibits protein phosphatase 2A (PP2A) during mitosis. When phosphorylated at Ser-67 during mitosis, specifically interacts with ppp2r2d (PR55-delta) and inhibits its activity, leading to inactivation of PP2A, an essential condition to keep cyclin-B1-CDK1 activity high during M phase. This is Alpha-endosulfine (ensa) from Xenopus tropicalis (Western clawed frog).